The following is a 389-amino-acid chain: Mitochondrial carrier homolog 1 (389 aa).

Positions 1–78 are disordered; that stretch reads MGASDPEVAP…PGAPGSGDNA (78 aa). The Mitochondrial intermembrane segment spans residues 1 to 93; that stretch reads MGASDPEVAP…LFVALGAGVT (93 aa). Positions 15–33 are enriched in gly residues; the sequence is GAAGMAGAGAGAGARGGAP. R29 is modified (omega-N-methylarginine). 2 Solcar repeats span residues 81–176 and 192–280; these read TEAL…FPPD and KKVV…INAY. A helical transmembrane segment spans residues 94 to 104; that stretch reads ALSHPLLYVKL. At 105–155 the chain is on the cytoplasmic side; that stretch reads LIQVGHEPMPPTLGTNVLGRKVLYLPSFFTYAKYIVQVDGKIGLFRGLSPR. The helical transmembrane segment at 156–176 threads the bilayer; that stretch reads LMSNALSTVTRGSMKKVFPPD. The Mitochondrial intermembrane segment spans residues 177-209; it reads EMEQVSNKDDMKTSLKKVVKETSYEMMMQCVSR. Residues 210–229 form a helical membrane-spanning segment; sequence MLAHPLHVISMRCMVQFVGR. Residues 230–254 are Cytoplasmic-facing; that stretch reads EAKYSGVLSSIGKIFKEEGLLGFFV. Residues 255-279 form a helical membrane-spanning segment; it reads GLIPHLLGDVVFLWGCNLLAHFINA. Topologically, residues 280-322 are mitochondrial intermembrane; sequence YLVDDSVSDTPGGLGNDQNPGSQFSQALAIRSYTKFVMGIAVS. Residues 323-342 form a helical membrane-spanning segment; sequence MLTYPFLLVGDLMAVNNCGL. Residues 343–371 lie on the Cytoplasmic side of the membrane; that stretch reads RAGLPPYSPVFKSWIHCWKYLSVQGQLFR. Residues 372–389 form a helical membrane-spanning segment; it reads GSSLLFRRVSSGSCFALE.

This sequence belongs to the mitochondrial carrier (TC 2.A.29) family. In terms of assembly, interacts with PSEN1.

The protein localises to the mitochondrion outer membrane. In terms of biological role, protein insertase that mediates insertion of transmembrane proteins into the mitochondrial outer membrane. Catalyzes insertion of proteins with alpha-helical transmembrane regions, such as signal-anchored, tail-anchored and multi-pass membrane proteins. Does not mediate insertion of beta-barrel transmembrane proteins. May play a role in apoptosis. This is Mitochondrial carrier homolog 1 (Mtch1) from Mus musculus (Mouse).